A 161-amino-acid polypeptide reads, in one-letter code: MAEEHRCETPEGHRLCVNNCGFFGSSATMNLCSNCYGDLCLKQQQQASMKSTVESSLSPVIAPVLENYAAELEIPTTKKTEEKKPIQIPTEQPSPPQRPNRCTVCRKRVGLTGFMCRCGTTFCGSHRYPEVHGCTFDFKSAGREEIAKANPLVIAAKLQKI.

The segment at 10–44 (PEGHRLCVNNCGFFGSSATMNLCSNCYGDLCLKQQ) adopts an A20-type zinc-finger fold. C16, C20, C32, and C35 together coordinate Zn(2+). Positions 76–85 (TTKKTEEKKP) are enriched in basic and acidic residues. Residues 76–99 (TTKKTEEKKPIQIPTEQPSPPQRP) form a disordered region. The AN1-type zinc-finger motif lies at 96 to 142 (PQRPNRCTVCRKRVGLTGFMCRCGTTFCGSHRYPEVHGCTFDFKSAG). Residues C102, C105, C116, C118, C123, H126, H132, and C134 each contribute to the Zn(2+) site.

Its function is as follows. May be involved in environmental stress response. The polypeptide is Zinc finger A20 and AN1 domain-containing stress-associated protein 4 (SAP4) (Arabidopsis thaliana (Mouse-ear cress)).